Reading from the N-terminus, the 322-residue chain is Chemokine XC receptor 1 (322 aa).

Over 1 to 27 (MESSTAFYDYHDKLSLLCENNVIFFST) the chain is Extracellular. The helical transmembrane segment at 28–55 (ISTIVLYSLVFLLSLVGNSLVLWVLVKY) threads the bilayer. The Cytoplasmic segment spans residues 56 to 65 (ENLESLTNIF). The chain crosses the membrane as a helical span at residues 66-85 (ILNLCLSDLMFSCLLPVLIS). Residues 86 to 98 (AQWSWFLGDFFCK) lie on the Extracellular side of the membrane. Cysteines 97 and 170 form a disulfide. Residues 99 to 120 (FFNMIFGISLYSSIFFLTIMTI) traverse the membrane as a helical segment. The Cytoplasmic segment spans residues 121–137 (HRYLSVVSPISTLGIHT). Residues 138-162 (LRCRVLVTSCVWAASILFSIPDAVF) traverse the membrane as a helical segment. Topologically, residues 163–185 (HKVISLNCKYSEHHGFLASVYQH) are extracellular. The helical transmembrane segment at 186-204 (NIFFLLSMGIILFCYVQIL) threads the bilayer. The Cytoplasmic portion of the chain corresponds to 205 to 220 (RTLFRTRSRQRHRTVR). Residues 221–243 (LIFTVVVAYFLSWAPYNLTLFLK) form a helical membrane-spanning segment. Topologically, residues 244–259 (TGIIQQSCESLQQLDI) are extracellular. The chain crosses the membrane as a helical span at residues 260-283 (AMIICRHLAFSHCCFNPVLYVFVG). At 284-322 (IKFRRHLKHLFQQVWLCRKTSSTVPCSPGTFTYEGPSFY) the chain is on the cytoplasmic side.

It belongs to the G-protein coupled receptor 1 family. As to expression, expressed by dendritic cells from the thymus, slpeen, subcutaneous lymph nodes and mesenteric lymph nodes.

It is found in the cell membrane. Its function is as follows. Receptor for chemokines SCYC1 and SCYC2. Subsequently transduces a signal by increasing the intracellular calcium ions level. Receptor for XCL1/Lymphotactin. This Mus musculus (Mouse) protein is Chemokine XC receptor 1 (Xcr1).